Here is a 257-residue protein sequence, read N- to C-terminus: Putative pentatricopeptide repeat-containing protein At1g43010 (257 aa).

PPR repeat units lie at residues 133–168 (KMRD…GFLL) and 169–203 (KPYL…NMEV).

Belongs to the PPR family. P subfamily.

The protein is Putative pentatricopeptide repeat-containing protein At1g43010 of Arabidopsis thaliana (Mouse-ear cress).